The following is a 1139-amino-acid chain: MAATSPHLTSIPQAVRVAASIDPSIDPGLKQQAIDYLTKVKQLSEETWQLYLQGAGAPGPSTTGRDGKEKLETDMRMFCLQVVDTVLIQKPEVMGADAVQGMYEAIVEFIQVEYIGGSCEGGQGFLRNKLAFTISQLFLRAFPSHIPTFLHPFFALLSPPTSSPPNLHPQLLTIRLLLEIAQEIHDTTLKTARIMTKERQERDGVVRDVIRSSGDDKTAVQGMLGIIEKGLEQMNSGNSSDKWAEAVDATLKTLSAWIPWIDLGVALNPTTLPFYHRLLHQPILSFRTATAGIYRTLVAKGIQDPSSRLQVLRVLAPVAVIDPLETETRGGKSEEVATFRASLGVVLSAYGVALIGISDNTEVAEQLRNEAEEMMNPALPLLLRFLSDRQYEVPLSVSPFVSDLLRIYKRMYKPPNPSTKAGQAPSPPSTLPQLSPERRQFLASMLDILIRQLAWPEDTEWEAPGNEDELDEDIAAFKNFRGSCRSFIESIAQIDKSLHTEVVARIVIATLDAYASGGGAAAVPWQQAELAMHLVYTFGEVSKNSTRAAFYELPPEMATKAARNKLRAAQGSGRTTPSSSDNVDLGPSSNNDRLEYEQFPLSPLGQLLTRCMTSGISSYPHPSVTLQYFEIIVRYIEFWKAKPETLPGLFEALLDGQGIHNSDEGVRRRCFYLFSKLCKDCRNDTVEGMVSPILDSMRDMMVINAELPPTDTPDEDPLIKATTGKSYVADQLYLFEASGNLVYLTKADPAKQMALLEAVAGPLLSGLGSGVERARVDENDLQAVLQVHHHLMALGHFAKGFPIVPDKLVELLPYTGPFKQMAEALLQAIEILKRRRVVRDAARFAFSQFANAIGTPVAELVPRFVSAVVTEFEPSELVDFLLFLQLLMHRLQGSTFETMDMLLLPLLSRIFTVLQQPVTGTDEAQVHARLKDAYLAFFTSLMNENLDGIFITDRNKPEFENVLTTLFNLTQDYSDGASQRLAFGFFSRSVIAWGTSPEAAARPSVFAESAMASQSKMVSGGGTAQPNAHAVTQEQRAKQCLPGYENFIYQRLLPAAFEVPANSQFNIRGGQLIVHEAAVLVRNTVQARGQEAIDFMLSDLLRRLNCPSDIANQLIASLTTQQAKDFKKTFFDFIKAMRG.

Residues 562-589 (ARNKLRAAQGSGRTTPSSSDNVDLGPSS) are disordered. Over residues 572-589 (SGRTTPSSSDNVDLGPSS) the composition is skewed to polar residues.

The protein belongs to the exportin family.

The protein localises to the nucleus. The protein resides in the cytoplasm. Functionally, tRNA nucleus export receptor which facilitates tRNA translocation across the nuclear pore complex. Involved in pre-tRNA splicing, probably by affecting the interaction of pre-tRNA with splicing endonuclease. The polypeptide is Exportin-T (LOS1) (Cryptococcus neoformans var. neoformans serotype D (strain B-3501A) (Filobasidiella neoformans)).